We begin with the raw amino-acid sequence, 346 residues long: 26S proteasome non-ATPase regulatory subunit 4 (346 aa).

Residues 5 to 190 form the VWFA domain; sequence STMICVDNSE…LTDALLQSSV (186 aa). 2 UIM domains span residues 216–235 and 273–292; these read ENDPDLALALRVSMEEERAR and TEEQQLEWALRLSMQENAPA. Residues 290 to 346 are disordered; sequence APAEQPQVQHEQMDVDGAPAVGGDNLDDLMNNPELLQQIVDDLPAANAEKDDDKEKK. A compositionally biased stretch (basic and acidic residues) spans 337-346; that stretch reads AEKDDDKEKK.

Belongs to the proteasome subunit S5A family. The 26S proteasome is composed of a core protease, known as the 20S proteasome, capped at one or both ends by the 19S regulatory complex (RC). The RC is composed of at least 18 different subunits in two subcomplexes, the base and the lid, which form the portions proximal and distal to the 20S proteolytic core, respectively. Broadly expressed with high expression in the pharynx, intestine, hypodermis and spermatheca and weak expression in the excretory cell, body wall muscle, vulva and somatic gonad.

It is found in the cytoplasm. Its subcellular location is the nucleus. Functionally, binds and presumably selects ubiquitin-conjugates for destruction. Required for protein degradation and ubiquitin-proteasome system (UBS) function and regulates proteasomal subunit expression. Involvement in UBS might be cell type specific. Regulator of the autophagy-lysosome pathway that may confer resistance to autophagy by regulating the expression of autophagy-related proteins such as lgg-1, and by regulating lysosome formation, possibly by modulating elt-2 activity. Required for fertility, sperm production, and sex determination through regulation of tra-2 protein. Plays a role in the elimination of paternal mitochondria in fertilized eggs. The chain is 26S proteasome non-ATPase regulatory subunit 4 from Caenorhabditis elegans.